The chain runs to 548 residues: pH-responsive protein 1 (548 aa).

Residues 1-20 form the signal peptide; that stretch reads MYSLIKSLATFATLFSLTLA. N-linked (GlcNAc...) asparagine glycosylation occurs at asparagine 41. A disulfide bridge links cysteine 82 with cysteine 111. N-linked (GlcNAc...) asparagine glycans are attached at residues asparagine 173 and asparagine 261. 5 cysteine pairs are disulfide-bonded: cysteine 224–cysteine 358, cysteine 242–cysteine 273, cysteine 381–cysteine 432, cysteine 390–cysteine 456, and cysteine 409–cysteine 414. The segment at 483–518 is disordered; that stretch reads GKASSSGGSSKSGSSSASASGSSSSSTSSGSSSSSG. Serine 517 carries GPI-anchor amidated serine lipidation. Positions 518 to 548 are cleaved as a propeptide — removed in mature form; sequence GVKATQQMSMVKLVSIITIVTAFVGGMSVVF.

This sequence belongs to the glycosyl hydrolase 72 family.

It is found in the cell membrane. Required for apical cell growth and plays an essential role in morphogenesis. May be integral to the pathogenic ability of the organism. This chain is pH-responsive protein 1 (PHR1), found in Candida albicans (strain SC5314 / ATCC MYA-2876) (Yeast).